A 37-amino-acid polypeptide reads, in one-letter code: Large ribosomal subunit protein bL36c (37 aa).

It belongs to the bacterial ribosomal protein bL36 family.

The protein resides in the plastid. It is found in the chloroplast. This chain is Large ribosomal subunit protein bL36c, found in Vitis vinifera (Grape).